Here is a 293-residue protein sequence, read N- to C-terminus: MMRIALFLLTNLAVMVVFGLVLSLTGIQSSSVQGLMIMALLFGFGGSFVSLLMSKWMALRSVGGEVIEQPRNERERWLVNTVATQARQAGIAMPQVAIYHAPDINAFATGARRDASLVAVSTGLLQNMSPDEAEAVIAHEISHIANGDMVTMTLIQGVVNTFVIFISRILAQLAAGFMGGNRDEGEESNGNPLIYFAVATVLELVFGILASIITMWFSRHREFHADAGSAKLVGREKMIAALQRLKTSYEPQEATSMMAFCINGKSKSLSELFMTHPPLDKRIEALRTGEYLK.

The next 2 membrane-spanning stretches (helical) occupy residues Ile4–Leu24 and Gly34–Ser54. Zn(2+) is bound at residue His139. The active site involves Glu140. His143 lines the Zn(2+) pocket. Helical transmembrane passes span Val158 to Met178 and Leu193 to Ile213. Position 222 (Glu222) interacts with Zn(2+).

This sequence belongs to the peptidase M48B family. Requires Zn(2+) as cofactor.

Its subcellular location is the cell inner membrane. The protein is Protease HtpX of Escherichia coli (strain ATCC 8739 / DSM 1576 / NBRC 3972 / NCIMB 8545 / WDCM 00012 / Crooks).